The sequence spans 320 residues: Nicotianamine synthase 1 (320 aa).

Belongs to the nicotianamine synthase (NAS)-like family. As to expression, in shoots and roots.

The enzyme catalyses 3 S-adenosyl-L-methionine = nicotianamine + 3 S-methyl-5'-thioadenosine + 3 H(+). Synthesizes nicotianamine, a polyamine which serves as a sensor for the physiological iron status within the plant, and/or might be involved in the transport of iron. The sequence is that of Nicotianamine synthase 1 (NAS1) from Arabidopsis thaliana (Mouse-ear cress).